Reading from the N-terminus, the 504-residue chain is L-amino-acid oxidase (504 aa).

Residues 1–18 (MNVFFMFSLLFLATLGSC) form the signal peptide. Cysteine 28 and cysteine 191 form a disulfide bridge. FAD contacts are provided by residues 61 to 62 (MS), 81 to 82 (EA), arginine 89, and 105 to 108 (GPMR). Position 108 (arginine 108) interacts with substrate. N-linked (GlcNAc...) asparagine glycosylation occurs at asparagine 190. Histidine 241 contacts substrate. Valine 279 contacts FAD. A disulfide bond links cysteine 349 and cysteine 430. An N-linked (GlcNAc...) asparagine glycan is attached at asparagine 379. Tyrosine 390 lines the substrate pocket. FAD is bound by residues glutamate 475 and 482 to 487 (GWIDST). 482-483 (GW) serves as a coordination point for substrate.

The protein belongs to the flavin monoamine oxidase family. FIG1 subfamily. In terms of assembly, homodimer; non-covalently linked. FAD serves as cofactor. As to expression, expressed by the venom gland.

The protein resides in the secreted. The enzyme catalyses an L-alpha-amino acid + O2 + H2O = a 2-oxocarboxylate + H2O2 + NH4(+). It catalyses the reaction L-leucine + O2 + H2O = 4-methyl-2-oxopentanoate + H2O2 + NH4(+). It carries out the reaction L-phenylalanine + O2 + H2O = 3-phenylpyruvate + H2O2 + NH4(+). The catalysed reaction is L-tryptophan + O2 + H2O = indole-3-pyruvate + H2O2 + NH4(+). The enzyme catalyses L-methionine + O2 + H2O = 4-methylsulfanyl-2-oxobutanoate + H2O2 + NH4(+). It catalyses the reaction L-tyrosine + O2 + H2O = 3-(4-hydroxyphenyl)pyruvate + H2O2 + NH4(+). In terms of biological role, catalyzes an oxidative deamination of predominantly hydrophobic and aromatic L-amino acids, thus producing hydrogen peroxide that may contribute to the diverse toxic effects of this enzyme. Is highly active on L-Tyr followed by L-Phe, L-Met, L-Leu, L-Trp, and weakly active on L-Ile, L-Arg, L-Val, L-Lys, and L-Ala. Inhibits ADP- and collagen-induced platelet aggregation. This inhibition is inhibited by catalase, indicating the importance of generated H(2)O(2) for the inhibitory effect. This effect on platelets among snake L-amino-acid oxidases is however controversial, since some of them induce aggregation, whereas the other inhibit agonist-induced aggregation. In vivo, this enzyme induces a rapid, substantial and reversible increase in the paw volume of mice (edema). In addition, myofibrosis, and inflammatory cell infiltration on the paw tissue are also observed. This Daboia russelii (Russel's viper) protein is L-amino-acid oxidase.